The primary structure comprises 358 residues: Cyclin-dependent kinase 10 (358 aa).

The 285-residue stretch at 37 to 321 folds into the Protein kinase domain; that stretch reads FEKLNRIGEG…AGDCLESSYF (285 aa). ATP-binding positions include 43–51 and Lys66; that span reads IGEGTYGIV. Asp161 functions as the Proton acceptor in the catalytic mechanism. A Phosphothreonine modification is found at Thr194. Residues 332 to 358 form a disordered region; that stretch reads LMPTFPHHRNKRAAPAATEGQSKRCRP.

Belongs to the protein kinase superfamily. CMGC Ser/Thr protein kinase family. CDC2/CDKX subfamily. As to quaternary structure, heterodimer with CCNQ, the interaction is required for kinase activity. Interacts with ETS2. Interacts with PRK2.

It localises to the cytoplasm. Its subcellular location is the cytoskeleton. It is found in the cilium basal body. It carries out the reaction L-seryl-[protein] + ATP = O-phospho-L-seryl-[protein] + ADP + H(+). It catalyses the reaction L-threonyl-[protein] + ATP = O-phospho-L-threonyl-[protein] + ADP + H(+). Functionally, cyclin-dependent kinase that phosphorylates the transcription factor ETS2 (in vitro) and positively controls its proteasomal degradation (in cells). Involved in the regulation of actin cytoskeleton organization through the phosphorylation of actin dynamics regulators such as PKN2. Is a negative regulator of ciliogenesis through phosphorylation of PKN2 and promotion of RhoA signaling. The sequence is that of Cyclin-dependent kinase 10 (Cdk10) from Rattus norvegicus (Rat).